The primary structure comprises 379 residues: Lipoyl synthase, mitochondrial (379 aa).

[4Fe-4S] cluster is bound by residues C94, C99, C105, C126, C130, C133, and S342. In terms of domain architecture, Radical SAM core spans 109–331 (GEDNGAATAT…EKEAMSMGFL (223 aa)).

This sequence belongs to the radical SAM superfamily. Lipoyl synthase family. Requires [4Fe-4S] cluster as cofactor.

Its subcellular location is the mitochondrion. It carries out the reaction [[Fe-S] cluster scaffold protein carrying a second [4Fe-4S](2+) cluster] + N(6)-octanoyl-L-lysyl-[protein] + 2 oxidized [2Fe-2S]-[ferredoxin] + 2 S-adenosyl-L-methionine + 4 H(+) = [[Fe-S] cluster scaffold protein] + N(6)-[(R)-dihydrolipoyl]-L-lysyl-[protein] + 4 Fe(3+) + 2 hydrogen sulfide + 2 5'-deoxyadenosine + 2 L-methionine + 2 reduced [2Fe-2S]-[ferredoxin]. The protein operates within protein modification; protein lipoylation via endogenous pathway; protein N(6)-(lipoyl)lysine from octanoyl-[acyl-carrier-protein]: step 2/2. In terms of biological role, catalyzes the radical-mediated insertion of two sulfur atoms into the C-6 and C-8 positions of the octanoyl moiety bound to the lipoyl domains of lipoate-dependent enzymes, thereby converting the octanoylated domains into lipoylated derivatives. This Leishmania braziliensis protein is Lipoyl synthase, mitochondrial.